The sequence spans 58 residues: Small ribosomal subunit protein bS21 (58 aa).

Positions 35-58 (REHYEKPSVKRKKKSEAARKRKFK) are disordered. Over residues 43-58 (VKRKKKSEAARKRKFK) the composition is skewed to basic residues.

This sequence belongs to the bacterial ribosomal protein bS21 family.

The polypeptide is Small ribosomal subunit protein bS21 (Ruminiclostridium cellulolyticum (strain ATCC 35319 / DSM 5812 / JCM 6584 / H10) (Clostridium cellulolyticum)).